We begin with the raw amino-acid sequence, 213 residues long: Large ribosomal subunit protein uL1 (213 aa).

It belongs to the universal ribosomal protein uL1 family. Part of the 50S ribosomal subunit.

In terms of biological role, binds directly to 23S rRNA. Probably involved in E site tRNA release. Its function is as follows. Protein L1 is also a translational repressor protein, it controls the translation of its operon by binding to its mRNA. The polypeptide is Large ribosomal subunit protein uL1 (Methanosarcina mazei (strain ATCC BAA-159 / DSM 3647 / Goe1 / Go1 / JCM 11833 / OCM 88) (Methanosarcina frisia)).